The primary structure comprises 129 residues: N16.2 matrix protein (129 aa).

A signal peptide spans 1–23 (MKCTLRWTITALVLLGICHLARP). A run of 5 repeats spans residues 91–92 (NG), 93–94 (NG), 95–96 (DG), 97–98 (NG), and 99–100 (NG). The 5 X 2 AA tandem repeats of N-G stretch occupies residues 91–100 (NGNGDGNGNG).

The protein belongs to the N16 matrix protein family. Heterooligomer; disulfide-linked. Pif97, Pif80, N16 and other proteins form a complex. As to expression, component of conchiolin, the organic matrix of nacre. Expressed at extremely high levels in the dorsal region of the mantle, which region may be responsible for the nacreous layer formation, but only in trace amounts at the mantle edge, which region may be responsible for the prismatic layer formation.

It localises to the secreted. It is found in the extracellular space. The protein resides in the extracellular matrix. May be specifically involved in the formation of the nacreous layer. The protein is N16.2 matrix protein of Pinctada fucata (Akoya pearl oyster).